The primary structure comprises 222 residues: Eukaryotic translation initiation factor 3 subunit K (222 aa).

Positions 46–208 (YDLEANLAVL…KIKTKNITEK (163 aa)) constitute a PCI domain.

The protein belongs to the eIF-3 subunit K family. As to quaternary structure, component of the eukaryotic translation initiation factor 3 (eIF-3) complex. The eIF-3 complex interacts with pix.

The protein localises to the cytoplasm. Component of the eukaryotic translation initiation factor 3 (eIF-3) complex, which is involved in protein synthesis of a specialized repertoire of mRNAs and, together with other initiation factors, stimulates binding of mRNA and methionyl-tRNAi to the 40S ribosome. The eIF-3 complex specifically targets and initiates translation of a subset of mRNAs involved in cell proliferation. The chain is Eukaryotic translation initiation factor 3 subunit K from Drosophila ananassae (Fruit fly).